A 222-amino-acid polypeptide reads, in one-letter code: Protein CicA (222 aa).

The sequence is that of Protein CicA (cicA) from Caulobacter vibrioides (strain ATCC 19089 / CIP 103742 / CB 15) (Caulobacter crescentus).